Consider the following 384-residue polypeptide: Ribosomal RNA small subunit methyltransferase H (384 aa).

S-adenosyl-L-methionine is bound by residues 99-101 (GGH), D118, Y145, D169, and Q176.

The protein belongs to the methyltransferase superfamily. RsmH family.

It is found in the cytoplasm. The catalysed reaction is cytidine(1402) in 16S rRNA + S-adenosyl-L-methionine = N(4)-methylcytidine(1402) in 16S rRNA + S-adenosyl-L-homocysteine + H(+). Functionally, specifically methylates the N4 position of cytidine in position 1402 (C1402) of 16S rRNA. In Mycobacteroides abscessus (strain ATCC 19977 / DSM 44196 / CCUG 20993 / CIP 104536 / JCM 13569 / NCTC 13031 / TMC 1543 / L948) (Mycobacterium abscessus), this protein is Ribosomal RNA small subunit methyltransferase H.